Here is a 327-residue protein sequence, read N- to C-terminus: Phenylalanine--tRNA ligase alpha subunit (327 aa).

Glu-252 contacts Mg(2+).

This sequence belongs to the class-II aminoacyl-tRNA synthetase family. Phe-tRNA synthetase alpha subunit type 1 subfamily. Tetramer of two alpha and two beta subunits. Mg(2+) serves as cofactor.

The protein resides in the cytoplasm. The enzyme catalyses tRNA(Phe) + L-phenylalanine + ATP = L-phenylalanyl-tRNA(Phe) + AMP + diphosphate + H(+). This chain is Phenylalanine--tRNA ligase alpha subunit, found in Aliivibrio fischeri (strain ATCC 700601 / ES114) (Vibrio fischeri).